The sequence spans 348 residues: D-alanine--D-alanine ligase (348 aa).

The 203-residue stretch at 132 to 334 (KRVLESIGIP…YPDLIEELVT (203 aa)) folds into the ATP-grasp domain. 162-217 (LARLTFPIFVKPANMGSSVGISKAQTKVELRKAIQLALTYDSRVLIEQGVVAREIE) serves as a coordination point for ATP. 3 residues coordinate Mg(2+): Asp-288, Glu-301, and Asn-303.

This sequence belongs to the D-alanine--D-alanine ligase family. Mg(2+) serves as cofactor. Mn(2+) is required as a cofactor.

The protein localises to the cytoplasm. It catalyses the reaction 2 D-alanine + ATP = D-alanyl-D-alanine + ADP + phosphate + H(+). The protein operates within cell wall biogenesis; peptidoglycan biosynthesis. Its function is as follows. Cell wall formation. This Streptococcus pyogenes serotype M6 (strain ATCC BAA-946 / MGAS10394) protein is D-alanine--D-alanine ligase.